The following is a 314-amino-acid chain: Ribosomal RNA small subunit methyltransferase H (314 aa).

S-adenosyl-L-methionine is bound by residues 35 to 37, D55, F79, D101, and Q108; that span reads GGH.

The protein belongs to the methyltransferase superfamily. RsmH family.

The protein resides in the cytoplasm. It carries out the reaction cytidine(1402) in 16S rRNA + S-adenosyl-L-methionine = N(4)-methylcytidine(1402) in 16S rRNA + S-adenosyl-L-homocysteine + H(+). Specifically methylates the N4 position of cytidine in position 1402 (C1402) of 16S rRNA. The protein is Ribosomal RNA small subunit methyltransferase H of Pectobacterium carotovorum subsp. carotovorum (strain PC1).